The primary structure comprises 239 residues: Putative 3-methyladenine DNA glycosylase (239 aa).

It belongs to the DNA glycosylase MPG family.

The chain is Putative 3-methyladenine DNA glycosylase from Pseudomonas aeruginosa (strain ATCC 15692 / DSM 22644 / CIP 104116 / JCM 14847 / LMG 12228 / 1C / PRS 101 / PAO1).